Consider the following 429-residue polypeptide: Histidinol dehydrogenase (429 aa).

3 residues coordinate NAD(+): Tyr127, Gln188, and Asn211. Positions 234, 256, and 259 each coordinate substrate. Positions 256 and 259 each coordinate Zn(2+). Active-site proton acceptor residues include Glu324 and His325. The substrate site is built by His325, Asp358, Glu412, and His417. Zn(2+) is bound at residue Asp358. A Zn(2+)-binding site is contributed by His417.

The protein belongs to the histidinol dehydrogenase family. It depends on Zn(2+) as a cofactor.

It carries out the reaction L-histidinol + 2 NAD(+) + H2O = L-histidine + 2 NADH + 3 H(+). The protein operates within amino-acid biosynthesis; L-histidine biosynthesis; L-histidine from 5-phospho-alpha-D-ribose 1-diphosphate: step 9/9. In terms of biological role, catalyzes the sequential NAD-dependent oxidations of L-histidinol to L-histidinaldehyde and then to L-histidine. The protein is Histidinol dehydrogenase of Bacillus cereus (strain ATCC 10987 / NRS 248).